A 76-amino-acid polypeptide reads, in one-letter code: Small ribosomal subunit protein bS18 (76 aa).

The protein belongs to the bacterial ribosomal protein bS18 family. Part of the 30S ribosomal subunit. Forms a tight heterodimer with protein bS6.

Binds as a heterodimer with protein bS6 to the central domain of the 16S rRNA, where it helps stabilize the platform of the 30S subunit. The sequence is that of Small ribosomal subunit protein bS18 from Pseudomonas fluorescens (strain ATCC BAA-477 / NRRL B-23932 / Pf-5).